A 309-amino-acid polypeptide reads, in one-letter code: Protein FdhE (309 aa).

The protein belongs to the FdhE family.

It localises to the cytoplasm. Necessary for formate dehydrogenase activity. The chain is Protein FdhE from Salmonella enteritidis PT4 (strain P125109).